Here is a 390-residue protein sequence, read N- to C-terminus: Acetate kinase (390 aa).

Asparagine 10 is a binding site for Mg(2+). Residue lysine 17 participates in ATP binding. Arginine 89 lines the substrate pocket. The active-site Proton donor/acceptor is aspartate 146. Residues 204 to 208 (HLGNG), 278 to 280 (DMR), and 323 to 327 (GIGEN) each bind ATP. Glutamate 376 is a binding site for Mg(2+).

It belongs to the acetokinase family. Homodimer. The cofactor is Mg(2+). It depends on Mn(2+) as a cofactor.

Its subcellular location is the cytoplasm. The catalysed reaction is acetate + ATP = acetyl phosphate + ADP. Its pathway is metabolic intermediate biosynthesis; acetyl-CoA biosynthesis; acetyl-CoA from acetate: step 1/2. Catalyzes the formation of acetyl phosphate from acetate and ATP. Can also catalyze the reverse reaction. The chain is Acetate kinase from Mycoplasma pneumoniae (strain ATCC 29342 / M129 / Subtype 1) (Mycoplasmoides pneumoniae).